Here is a 443-residue protein sequence, read N- to C-terminus: Endothelin receptor type B (443 aa).

The signal sequence occupies residues 1-26 (MQPLPTLCGRVLVALILACGVAGVQG). Over 27-102 (EERRFPPARA…RTIEIKETFK (76 aa)) the chain is Extracellular. The segment covering 51–62 (TKTSWPTGSNAS) has biased composition (polar residues). The tract at residues 51–89 (TKTSWPTGSNASVPRLSAPPQMPKAGRTAGAQRRTLPPP) is disordered. Asn60 carries N-linked (GlcNAc...) asparagine glycosylation. A helical membrane pass occupies residues 103–127 (YINTVVSCLVFVLGIIGNSTLLRII). Residues 128 to 138 (YKNKCMRNGPN) are Cytoplasmic-facing. A helical membrane pass occupies residues 139–164 (ILIASLALGDLLHIIIDIPINVYKLL). Over 165 to 176 (AEDWPFGVEMCK) the chain is Extracellular. Cys175 and Cys256 are joined by a disulfide. The chain crosses the membrane as a helical span at residues 177-198 (LVPFIQKASVGITVLSLCALSI). The Cytoplasmic segment spans residues 199 to 219 (DRYRAVASWSRIKGIGVPKWT). Residues 220–244 (AVEIVLIWVVSVVLAVPEAVGFDMI) traverse the membrane as a helical segment. Residues 245-272 (TADYKGSYLRICLLHPTQKTAFMQFYKN) are Extracellular-facing. The helical transmembrane segment at 273–297 (AKDWWLFSFYFCLPLAITAFFYTLE) threads the bilayer. Topologically, residues 298-325 (TCEMLRKKSGMQIALNDHLKQRREVAKT) are cytoplasmic. Position 306 is a phosphoserine (Ser306). The chain crosses the membrane as a helical span at residues 326-351 (VFCLVLVFALCWLPLHLSRILKHTLY). At 352–363 (DQNDPHRCELLS) the chain is on the extracellular side. A helical transmembrane segment spans residues 364–390 (FLLVLEYIGINMASLNSCINPIALYLV). Residues 391 to 443 (SKRFKNCFKWCLCCWCQSFEEKQSLEDKQSCLKFKANDHGYDNFRSSNKYSSS) are Cytoplasmic-facing. 3 S-palmitoyl cysteine lipidation sites follow: Cys403, Cys404, and Cys406. The residue at position 420 (Ser420) is a Phosphoserine. Residue Tyr440 is modified to Phosphotyrosine. Ser441, Ser442, and Ser443 each carry phosphoserine.

This sequence belongs to the G-protein coupled receptor 1 family. Endothelin receptor subfamily. EDNRB sub-subfamily.

The protein localises to the cell membrane. Functionally, non-specific receptor for endothelin 1, 2, and 3. Mediates its action by association with G proteins that activate a phosphatidylinositol-calcium second messenger system. In Equus caballus (Horse), this protein is Endothelin receptor type B (EDNRB).